We begin with the raw amino-acid sequence, 59 residues long: Single-pass membrane and coiled-coil domain-containing protein 4 (59 aa).

Residues 1 to 27 (MRQLKGKPKKETSRDKKERKQAMQEAR) are disordered. The segment covering 9 to 27 (KKETSRDKKERKQAMQEAR) has biased composition (basic and acidic residues). The stretch at 9–31 (KKETSRDKKERKQAMQEARRQIT) forms a coiled coil. A helical transmembrane segment spans residues 32–52 (TVVLPTLAVVVLLIVVFVYVA).

The protein belongs to the SMCO4 family.

It localises to the membrane. This Bos taurus (Bovine) protein is Single-pass membrane and coiled-coil domain-containing protein 4 (SMCO4).